A 742-amino-acid polypeptide reads, in one-letter code: Polyphosphate kinase (742 aa).

N91 contributes to the ATP binding site. R431 and R461 together coordinate Mg(2+). The Phosphohistidine intermediate role is filled by H491. Residues Y524, R624, and H652 each coordinate ATP. A disordered region spans residues 718–742 (WTASPQEGHSVRDHQESLMERHRSP). The span at 726–742 (HSVRDHQESLMERHRSP) shows a compositional bias: basic and acidic residues.

This sequence belongs to the polyphosphate kinase 1 (PPK1) family. It depends on Mg(2+) as a cofactor. An intermediate of this reaction is the autophosphorylated ppk in which a phosphate is covalently linked to a histidine residue through a N-P bond.

The enzyme catalyses [phosphate](n) + ATP = [phosphate](n+1) + ADP. Functionally, catalyzes the reversible transfer of the terminal phosphate of ATP to form a long-chain polyphosphate (polyP). The polypeptide is Polyphosphate kinase (Mycobacterium bovis (strain ATCC BAA-935 / AF2122/97)).